Reading from the N-terminus, the 144-residue chain is Glycine-rich protein DC9.1 (144 aa).

Residues 5–25 (IFLLLGLSIAFAILISSEVAA) form a helical membrane-spanning segment. 11 tandem repeats follow at residues 37-42 (GYNNGG), 43-48 (GYHNGG), 50-55 (GYNNGG), 56-61 (GYHNGG), 63-68 (GYNNGG), 69-74 (GYHNGG), 76-81 (GYNNGG), 82-87 (GYHNGG), 89-94 (GYNNGG), 102-107 (GYNNGG), and 108-113 (GHHGGG). Residues 37 to 113 (GYNNGGGYHN…NNGGGHHGGG (77 aa)) are 11 X 6 AA tandem repeats of G-Y-[NH]-N-G -G.

Belongs to the GRP family.

The protein resides in the membrane. This Daucus carota (Wild carrot) protein is Glycine-rich protein DC9.1.